The following is a 493-amino-acid chain: Galactose-1-phosphate uridylyltransferase (493 aa).

This sequence belongs to the galactose-1-phosphate uridylyltransferase type 2 family.

The protein resides in the cytoplasm. The enzyme catalyses alpha-D-galactose 1-phosphate + UDP-alpha-D-glucose = alpha-D-glucose 1-phosphate + UDP-alpha-D-galactose. It functions in the pathway carbohydrate metabolism; galactose metabolism. This Streptococcus pneumoniae serotype 19F (strain G54) protein is Galactose-1-phosphate uridylyltransferase.